The following is a 525-amino-acid chain: DNA damage-binding protein CMR1 (525 aa).

2 disordered regions span residues 38–86 (AGIF…AESE) and 212–233 (GILDASQQPDQNESDEEDEYPD). The span at 53–62 (TKKKPAPKRV) shows a compositional bias: basic residues. 7 WD repeats span residues 183 to 224 (ITRE…DQNE), 241 to 281 (PHTN…ATEA), 288 to 328 (SDDE…KANP), 339 to 379 (LSEK…TKHP), 384 to 425 (EHES…KDWK), 448 to 491 (GKWV…LAQL), and 494 to 525 (DVITAVPAVAVFHRTQNWVVGGTGSAKVCLWM). Acidic residues predominate over residues 223–232 (NESDEEDEYP).

Belongs to the WD repeat DDB2/WDR76 family.

Its function is as follows. DNA-binding protein that binds to both single- and double-stranded DNA. Binds preferentially to UV-damaged DNA. May be involved in DNA-metabolic processes. The polypeptide is DNA damage-binding protein CMR1 (Coccidioides immitis (strain RS) (Valley fever fungus)).